Consider the following 860-residue polypeptide: Semaphorin-3aa (860 aa).

An N-terminal signal peptide occupies residues 1 to 17; sequence MDYLVGIFLLLCGVALP. The Sema domain maps to 31–515; sequence RLKLSYNEML…SDLGISQMPL (485 aa). N-linked (GlcNAc...) asparagine glycosylation is present at N53. Cysteines 104 and 115 form a disulfide. A glycan (N-linked (GlcNAc...) asparagine) is linked at N126. 4 cysteine pairs are disulfide-bonded: C133–C142, C270–C382, C294–C342, and C518–C536. In terms of domain architecture, Ig-like C2-type spans 579-668; that stretch reads GYSSVEERSV…FIQPLRRINL (90 aa). N593 carries an N-linked (GlcNAc...) asparagine glycan. A disulfide bond links C652 and C717. The tract at residues 725–860 is disordered; the sequence is KKPKGKKAPK…HEQQRPPRSV (136 aa). 2 stretches are compositionally biased toward polar residues: residues 748–764 and 782–818; these read TPQT…QRAQ and TGLQ…QPNQ. Positions 838–860 are enriched in basic and acidic residues; sequence QLQENKRGRNRRTHEQQRPPRSV.

Belongs to the semaphorin family.

Its subcellular location is the secreted. May influence outgrowth by a variety of growth cones including those of the posterior lateral line ganglion. This Danio rerio (Zebrafish) protein is Semaphorin-3aa (sema3aa).